A 59-amino-acid chain; its full sequence is Bacteriocin curvacin-A (59 aa).

Residues 1–18 constitute a propeptide that is removed on maturation; the sequence is MNNVKELSMTELQTITGG. The cysteines at positions 28 and 33 are disulfide-linked.

It belongs to the bacteriocin class IIA/YGNGV family.

It localises to the secreted. Its function is as follows. Bactericidal activity; inhibits closely related Lactobacilli, Listeria monocytogenes and ivanovvi, Enterococcus faecalis, Carnobacterium sp and Brocothrix thermosphacta. The sequence is that of Bacteriocin curvacin-A (curA) from Latilactobacillus curvatus (Lactobacillus curvatus).